The sequence spans 415 residues: Tyrosine--tRNA ligase (415 aa).

A 'HIGH' region motif is present at residues 54–63 (PTGTDIHIGH). The 'KMSKS' region signature appears at 248–252 (KMSKS). Lys251 provides a ligand contact to ATP. An S4 RNA-binding domain is found at 351-415 (AKAFYLFSKM…GKKKFLRVST (65 aa)).

Belongs to the class-I aminoacyl-tRNA synthetase family. TyrS type 2 subfamily. In terms of assembly, homodimer.

It is found in the cytoplasm. It catalyses the reaction tRNA(Tyr) + L-tyrosine + ATP = L-tyrosyl-tRNA(Tyr) + AMP + diphosphate + H(+). Functionally, catalyzes the attachment of tyrosine to tRNA(Tyr) in a two-step reaction: tyrosine is first activated by ATP to form Tyr-AMP and then transferred to the acceptor end of tRNA(Tyr). This is Tyrosine--tRNA ligase from Prochlorococcus marinus (strain NATL2A).